A 501-amino-acid chain; its full sequence is Probable cytosol aminopeptidase (501 aa).

Residues Lys-272 and Asp-277 each contribute to the Mn(2+) site. Lys-284 is an active-site residue. Residues Asp-295, Asp-354, and Glu-356 each contribute to the Mn(2+) site. Residue Arg-358 is part of the active site.

It belongs to the peptidase M17 family. Mn(2+) serves as cofactor.

The protein resides in the cytoplasm. The catalysed reaction is Release of an N-terminal amino acid, Xaa-|-Yaa-, in which Xaa is preferably Leu, but may be other amino acids including Pro although not Arg or Lys, and Yaa may be Pro. Amino acid amides and methyl esters are also readily hydrolyzed, but rates on arylamides are exceedingly low.. It catalyses the reaction Release of an N-terminal amino acid, preferentially leucine, but not glutamic or aspartic acids.. Functionally, presumably involved in the processing and regular turnover of intracellular proteins. Catalyzes the removal of unsubstituted N-terminal amino acids from various peptides. The polypeptide is Probable cytosol aminopeptidase (Buchnera aphidicola subsp. Baizongia pistaciae (strain Bp)).